The primary structure comprises 169 residues: UPF0303 protein BOV_1367 (169 aa).

It belongs to the UPF0303 family.

The protein is UPF0303 protein BOV_1367 of Brucella ovis (strain ATCC 25840 / 63/290 / NCTC 10512).